Reading from the N-terminus, the 351-residue chain is Glycerol-3-phosphate dehydrogenase 1-like protein (351 aa).

Residue 12 to 17 (GSGNWG) participates in NAD(+) binding. Residue K122 coordinates substrate. A155 contacts NAD(+). The Proton acceptor role is filled by K206. Residues R271, K298, and Q300 each contribute to the NAD(+) site. Position 271 to 272 (271 to 272 (RN)) interacts with substrate.

Belongs to the NAD-dependent glycerol-3-phosphate dehydrogenase family. In terms of assembly, interacts with SCN5A.

The protein localises to the cytoplasm. The enzyme catalyses sn-glycerol 3-phosphate + NAD(+) = dihydroxyacetone phosphate + NADH + H(+). In terms of biological role, plays a role in regulating cardiac sodium current; decreased enzymatic activity with resulting increased levels of glycerol 3-phosphate activating the DPD1L-dependent SCN5A phosphorylation pathway, may ultimately lead to decreased sodium current; cardiac sodium current may also be reduced due to alterations of NAD(H) balance induced by DPD1L. The protein is Glycerol-3-phosphate dehydrogenase 1-like protein (Gpd1l) of Mus musculus (Mouse).